Reading from the N-terminus, the 54-residue chain is Lectin alpha-1 chain (54 aa).

This sequence belongs to the leguminous lectin family. In terms of assembly, tetramer of two alpha and two beta chains.

This chain is Lectin alpha-1 chain, found in Lathyrus cicera (Flat-pod pea).